Reading from the N-terminus, the 967-residue chain is Aminopeptidase N (967 aa).

Residues 2-8 (AKGFYIS) lie on the Cytoplasmic side of the membrane. The helical; Signal-anchor for type II membrane protein transmembrane segment at 9–32 (KSLGILGILLGVAAVCTIIALSVV) threads the bilayer. Residues 33–68 (YSQEKNKNANSSPVASTTPSASATTNPASATTLDQS) form a cytosolic Ser/Thr-rich junction region. Residues 33–967 (YSQEKNKNAN…VLQWFTENSK (935 aa)) lie on the Extracellular side of the membrane. Positions 40-62 (NANSSPVASTTPSASATTNPASA) are disordered. Positions 41 to 62 (ANSSPVASTTPSASATTNPASA) are enriched in low complexity. The interval 69–967 (KAWNRYRLPN…VLQWFTENSK (899 aa)) is metalloprotease. N128 carries an N-linked (GlcNAc...) asparagine glycan. Y176 bears the Sulfotyrosine mark. N-linked (GlcNAc...) asparagine glycans are attached at residues N234 and N265. Positions 288 to 295 (DYVEKQAS) are necessary and sufficient to mediate interaction with HCoV-229E. N319 is a glycosylation site (N-linked (GlcNAc...) asparagine). Residue 352-356 (GAMEN) participates in substrate binding. H388 serves as a coordination point for Zn(2+). Catalysis depends on E389, which acts as the Proton acceptor. Zn(2+)-binding residues include H392 and E411. A sulfotyrosine mark is found at Y419 and Y424. Residues N527, N573, N625, N681, and N735 are each glycosylated (N-linked (GlcNAc...) asparagine). Intrachain disulfides connect C761/C768 and C798/C834. A glycan (N-linked (GlcNAc...) asparagine) is linked at N818. Y913 carries the sulfotyrosine modification.

Belongs to the peptidase M1 family. Homodimer. Interacts with SLC6A19. In terms of assembly, (Microbial infection) Interacts with the S1 domain of human coronavirus 229E/HCoV-229E spike protein. Zn(2+) is required as a cofactor. In terms of processing, sulfated. Post-translationally, N- and O-glycosylated. May undergo proteolysis and give rise to a soluble form. As to expression, expressed in epithelial cells of the kidney, intestine, and respiratory tract; granulocytes, monocytes, fibroblasts, endothelial cells, cerebral pericytes at the blood-brain barrier, synaptic membranes of cells in the CNS. Also expressed in endometrial stromal cells, but not in the endometrial glandular cells. Found in the vasculature of tissues that undergo angiogenesis and in malignant gliomas and lymph node metastases from multiple tumor types but not in blood vessels of normal tissues. A soluble form has been found in plasma. It is found to be elevated in plasma and effusions of cancer patients.

It localises to the cell membrane. The enzyme catalyses Release of an N-terminal amino acid, Xaa-|-Yaa- from a peptide, amide or arylamide. Xaa is preferably Ala, but may be most amino acids including Pro (slow action). When a terminal hydrophobic residue is followed by a prolyl residue, the two may be released as an intact Xaa-Pro dipeptide.. Its function is as follows. Broad specificity aminopeptidase which plays a role in the final digestion of peptides generated from hydrolysis of proteins by gastric and pancreatic proteases. Also involved in the processing of various peptides including peptide hormones, such as angiotensin III and IV, neuropeptides, and chemokines. May also be involved the cleavage of peptides bound to major histocompatibility complex class II molecules of antigen presenting cells. May have a role in angiogenesis and promote cholesterol crystallization. May have a role in amino acid transport by acting as binding partner of amino acid transporter SLC6A19 and regulating its activity. (Microbial infection) Acts as a receptor for human coronavirus 229E/HCoV-229E. In case of human coronavirus 229E (HCoV-229E) infection, serves as receptor for HCoV-229E spike glycoprotein. In terms of biological role, (Microbial infection) Mediates as well Human cytomegalovirus (HCMV) infection. This Homo sapiens (Human) protein is Aminopeptidase N (ANPEP).